The following is a 170-amino-acid chain: Probable inosine/xanthosine triphosphatase (170 aa).

Mg(2+) is bound at residue E31.

This sequence belongs to the YjjX NTPase family. In terms of assembly, homodimer. Mg(2+) serves as cofactor. Requires Mn(2+) as cofactor.

The enzyme catalyses XTP + H2O = XDP + phosphate + H(+). It carries out the reaction ITP + H2O = IDP + phosphate + H(+). Functionally, phosphatase that hydrolyzes non-canonical purine nucleotides such as XTP and ITP to their respective diphosphate derivatives. Probably excludes non-canonical purines from DNA/RNA precursor pool, thus preventing their incorporation into DNA/RNA and avoiding chromosomal lesions. The polypeptide is Probable inosine/xanthosine triphosphatase (Oceanobacillus iheyensis (strain DSM 14371 / CIP 107618 / JCM 11309 / KCTC 3954 / HTE831)).